Reading from the N-terminus, the 122-residue chain is MVSKKSRTEVRVKKHNRMRNHLAGTAQRPRLAVFRSNNHMYAQIIDDTVGNTLVSASTLDKDIKAELEKTNNVDAAAKLGTVIAKKALDKGISTVVFDRGGFIYAGKVKALAEAAREAGLDF.

The protein belongs to the universal ribosomal protein uL18 family. Part of the 50S ribosomal subunit; part of the 5S rRNA/L5/L18/L25 subcomplex. Contacts the 5S and 23S rRNAs.

Functionally, this is one of the proteins that bind and probably mediate the attachment of the 5S RNA into the large ribosomal subunit, where it forms part of the central protuberance. This Agathobacter rectalis (strain ATCC 33656 / DSM 3377 / JCM 17463 / KCTC 5835 / VPI 0990) (Eubacterium rectale) protein is Large ribosomal subunit protein uL18.